The following is a 253-amino-acid chain: HTH-type transcriptional regulator YdeO (253 aa).

An HTH araC/xylS-type domain is found at 137–233; that stretch reads GKVRNIVNMK…GNSPKRVSKE (97 aa). 2 consecutive DNA-binding regions (H-T-H motif) follow at residues 154-175 and 200-223; these read KDICDCLYISESLLKKKLKQEQ and VNKIAEQCGYASTSYFIYAFRKHF.

Its function is as follows. Induces the expression of gadE and mdtEF. Could also regulate the expression of other genes involved in acid resistance. This chain is HTH-type transcriptional regulator YdeO (ydeO), found in Escherichia coli (strain K12).